The chain runs to 394 residues: 8-amino-7-oxononanoate synthase (394 aa).

Residue Arg-21 coordinates substrate. Pyridoxal 5'-phosphate is bound at residue 112-113 (GY). Substrate is bound at residue His-137. 3 residues coordinate pyridoxal 5'-phosphate: Ser-183, His-211, and Thr-239. Lys-242 is subject to N6-(pyridoxal phosphate)lysine. Thr-358 contacts substrate.

This sequence belongs to the class-II pyridoxal-phosphate-dependent aminotransferase family. BioF subfamily. As to quaternary structure, homodimer. The cofactor is pyridoxal 5'-phosphate.

It catalyses the reaction 6-carboxyhexanoyl-[ACP] + L-alanine + H(+) = (8S)-8-amino-7-oxononanoate + holo-[ACP] + CO2. Its pathway is cofactor biosynthesis; biotin biosynthesis. Its function is as follows. Catalyzes the decarboxylative condensation of pimeloyl-[acyl-carrier protein] and L-alanine to produce 8-amino-7-oxononanoate (AON), [acyl-carrier protein], and carbon dioxide. This chain is 8-amino-7-oxononanoate synthase, found in Burkholderia thailandensis (strain ATCC 700388 / DSM 13276 / CCUG 48851 / CIP 106301 / E264).